The following is a 127-amino-acid chain: Modulator protein MzrA (127 aa).

Residues 1–10 lie on the Cytoplasmic side of the membrane; the sequence is MQIPRMSLRQ. A helical transmembrane segment spans residues 11-31; the sequence is LAWSGAVLLLVGTLLLAWSAV. The Periplasmic segment spans residues 32–127; the sequence is RQQESTLAIR…RLRDNSHRFG (96 aa).

The protein belongs to the MzrA family. As to quaternary structure, interacts with EnvZ.

It is found in the cell inner membrane. Functionally, modulates the activity of the EnvZ/OmpR two-component regulatory system, probably by directly modulating EnvZ enzymatic activity and increasing stability of phosphorylated OmpR. Links the two-component systems CpxA/CpxR and EnvZ/OmpR. The polypeptide is Modulator protein MzrA (Escherichia coli (strain K12)).